Here is a 315-residue protein sequence, read N- to C-terminus: Aspartate carbamoyltransferase catalytic subunit (315 aa).

Carbamoyl phosphate contacts are provided by arginine 64 and threonine 65. Lysine 92 is an L-aspartate binding site. Residues arginine 114, histidine 142, and glutamine 145 each contribute to the carbamoyl phosphate site. Positions 176 and 230 each coordinate L-aspartate. Residues glycine 271 and proline 272 each contribute to the carbamoyl phosphate site.

It belongs to the aspartate/ornithine carbamoyltransferase superfamily. ATCase family. Heterododecamer (2C3:3R2) of six catalytic PyrB chains organized as two trimers (C3), and six regulatory PyrI chains organized as three dimers (R2).

The catalysed reaction is carbamoyl phosphate + L-aspartate = N-carbamoyl-L-aspartate + phosphate + H(+). It functions in the pathway pyrimidine metabolism; UMP biosynthesis via de novo pathway; (S)-dihydroorotate from bicarbonate: step 2/3. Functionally, catalyzes the condensation of carbamoyl phosphate and aspartate to form carbamoyl aspartate and inorganic phosphate, the committed step in the de novo pyrimidine nucleotide biosynthesis pathway. The polypeptide is Aspartate carbamoyltransferase catalytic subunit (Lawsonia intracellularis (strain PHE/MN1-00)).